The following is a 295-amino-acid chain: MDEDFFLPDFSLVDIDFDFNIYEENNLSPDESLSNSRRADQSSKFDHQMHFECLREKPKAAVKPMMKINNKQQLISFDFSSNVISSPAAEEIIMDKLVGRGTKRKTCSHGTRSPVLAKEHVLAERKRREKLSEKFIALSALLPGLKKADKVTILDDAISRMKQLQEQLRTLKEEKEATRQMESMILVKKSKVFFDEEPNLSCSPSVHIEFDQALPEIEAKISQNDILIRILCEKSKGCMINILNTIENFQLRIENSIVLPFGDSTLDITVLAQMDKDFSMSILKDLVRNLRLAMV.

One can recognise a bHLH domain in the interval 115–164; sequence VLAKEHVLAERKRREKLSEKFIALSALLPGLKKADKVTILDDAISRMKQL.

Homodimer. Expressed in roots and leaves.

It localises to the nucleus. The protein is Transcription factor bHLH19 (BHLH19) of Arabidopsis thaliana (Mouse-ear cress).